Consider the following 287-residue polypeptide: Ribosomal RNA small subunit methyltransferase I (287 aa).

It belongs to the methyltransferase superfamily. RsmI family.

The protein resides in the cytoplasm. It catalyses the reaction cytidine(1402) in 16S rRNA + S-adenosyl-L-methionine = 2'-O-methylcytidine(1402) in 16S rRNA + S-adenosyl-L-homocysteine + H(+). In terms of biological role, catalyzes the 2'-O-methylation of the ribose of cytidine 1402 (C1402) in 16S rRNA. This Streptococcus pyogenes serotype M1 protein is Ribosomal RNA small subunit methyltransferase I.